Here is a 90-residue protein sequence, read N- to C-terminus: Small ribosomal subunit protein bS16 (90 aa).

Belongs to the bacterial ribosomal protein bS16 family.

This Bacillus anthracis (strain A0248) protein is Small ribosomal subunit protein bS16.